Reading from the N-terminus, the 650-residue chain is MSDLVKVTLPDGSQKEAPRGTPVIDFVKGQIGPGLAKAAYFARLDGEPVDLSRAIERDARLEIVTTRNPEALEVARHDAAHVMASVVQKLYPGTQVTIGPAIEDGFYYDFARETPFTPEDLERIEKATNEAIKADLPFVRSEISMEAALALFEGMGERYKVEIVKDIAAKGAKTLTLYKHGDWVDFCLGPHGPSTGRIGVVKLLNVAGAYWRGDAKNAMLQRIYGTAFFDKKELDAHLAKLEEVKKRDHRRLGPQLGLFTFHEFAPGAPFWLPAGTVLYNVLEDAMRRLVLKNGYQEVKTPLLFNKRLWETSGHWGKYRENMFLVVDSESDPALPLEDRCSFSLKPMNCPSHHLIYRMDKRSYRELPVRYFTTDALHRNEASGSLGGLTRVRQFEQDDAHIYLREEQVTDEVLRIFELMKVVYGAFGLGFEATFSTRPEQRIGDDALWDRAEALLRKSLDATGLKWTLNAGDGAFYGPKIDMLVTDSLGRKWQTCTIQLDYAAPERFDLTFVGEDNKEHRPVVIHRAIYGSFERFVAILVEHYAGAFPAWLAPVQARVVTVSDRFEAWAREAGEALQARGWRVEVDASSDKLGAKIRNAQLAKIPFTLVVGEKEVEAKGVSPRRHGGEDLKTMPLETFAELMAREATAPF.

Residues Asp3–Thr65 enclose the TGS domain. The interval Asp248–Pro548 is catalytic. Zn(2+) is bound by residues Cys349, His400, and His525.

It belongs to the class-II aminoacyl-tRNA synthetase family. In terms of assembly, homodimer. It depends on Zn(2+) as a cofactor.

It is found in the cytoplasm. It catalyses the reaction tRNA(Thr) + L-threonine + ATP = L-threonyl-tRNA(Thr) + AMP + diphosphate + H(+). Catalyzes the attachment of threonine to tRNA(Thr) in a two-step reaction: L-threonine is first activated by ATP to form Thr-AMP and then transferred to the acceptor end of tRNA(Thr). Also edits incorrectly charged L-seryl-tRNA(Thr). This chain is Threonine--tRNA ligase, found in Anaeromyxobacter dehalogenans (strain 2CP-1 / ATCC BAA-258).